The sequence spans 126 residues: MARVKRAVNAQKKRRTTLERASGYRGQRSRLYRKAKEQVTHSLGYAYRDRRARKGDFRRLWIQRINAAARANGITYNRFIQGLKAAEVEVDRRMLAELAVSDPAAFTTLVELAKGALPEDVNAPAA.

Residues methionine 1 to arginine 15 are compositionally biased toward basic residues. A disordered region spans residues methionine 1 to arginine 20.

The protein belongs to the bacterial ribosomal protein bL20 family.

In terms of biological role, binds directly to 23S ribosomal RNA and is necessary for the in vitro assembly process of the 50S ribosomal subunit. It is not involved in the protein synthesizing functions of that subunit. This Beutenbergia cavernae (strain ATCC BAA-8 / DSM 12333 / CCUG 43141 / JCM 11478 / NBRC 16432 / NCIMB 13614 / HKI 0122) protein is Large ribosomal subunit protein bL20.